The following is a 251-amino-acid chain: FHA domain-containing protein FHA1 (251 aa).

The FHA domain occupies 32 to 89 (IILGRNSKKSTVDVDLSSLGGGMNISRNHARIFYDFTRRRFSLEVLGKNGCFVEGVLH). The span at 163–174 (EYDDEDDDEEED) shows a compositional bias: acidic residues. The disordered stretch occupies residues 163 to 209 (EYDDEDDDEEEDIRGSGKKTWRDGHEGVYASGEKKREGRSKADREAD). A compositionally biased stretch (basic and acidic residues) spans 182 to 206 (TWRDGHEGVYASGEKKREGRSKADR).

Expressed in roots and vascular tissues near the shoot apex in young seedlings.

The protein localises to the nucleus. Its function is as follows. May play a role in the control of plant organ development. Does not show transactivation activity in yeast. The polypeptide is FHA domain-containing protein FHA1 (Arabidopsis thaliana (Mouse-ear cress)).